A 406-amino-acid polypeptide reads, in one-letter code: Histidine--tRNA ligase (406 aa).

The protein belongs to the class-II aminoacyl-tRNA synthetase family. Homodimer.

It is found in the cytoplasm. It carries out the reaction tRNA(His) + L-histidine + ATP = L-histidyl-tRNA(His) + AMP + diphosphate + H(+). The chain is Histidine--tRNA ligase from Nitratiruptor sp. (strain SB155-2).